Reading from the N-terminus, the 555-residue chain is Alpha-copaene synthase (555 aa).

Asp312, Asp316, Asp452, Ser456, and Glu460 together coordinate Mg(2+). The short motif at Asp312–Asp316 is the DDXXD motif element.

The protein belongs to the terpene synthase family. Requires Mg(2+) as cofactor. As to expression, mainly expressed in sunflower trichomes.

The catalysed reaction is (2E,6E)-farnesyl diphosphate = alpha-copaene + diphosphate. It catalyses the reaction (2E,6E)-farnesyl diphosphate = alpha-muurolene + diphosphate. It carries out the reaction (2E,6E)-farnesyl diphosphate = alpha-humulene + diphosphate. Its pathway is secondary metabolite biosynthesis; terpenoid biosynthesis. In terms of biological role, involved in the biosynthesis of germacrene-derived sesquiterpene lactones. Catalyzes the cyclization of farnesyl diphosphate to alpha-copaene, delta-cadinene, alpha-muurolene, beta-caryophyllene and alpha-humulene. The protein is Alpha-copaene synthase (CS) of Helianthus annuus (Common sunflower).